The chain runs to 668 residues: Envelope glycoprotein (668 aa).

The first 34 residues, 1-34 (MEGPTHPKPSKDKTFSWDLIILVGVLLRLDAGMA), serve as a signal peptide directing secretion. The Extracellular portion of the chain corresponds to 35–605 (NPSPHQVYNI…FNKSPWFTTL (571 aa)). N-linked (GlcNAc...) asparagine; by host glycosylation is found at Asn-43 and Asn-58. 2 disulfide bridges follow: Cys-115–Cys-132 and Cys-124–Cys-137. The segment at 243–264 (PQAMGPNPVLPDQKPPSRQSQI) is disordered. 3 N-linked (GlcNAc...) asparagine; by host glycosylation sites follow: Asn-286, Asn-322, and Asn-327. 3 disulfide bridges follow: Cys-332–Cys-335, Cys-332–Cys-558, and Cys-550–Cys-557. The CXXC motif lies at 332 to 335 (CWLC). 5 N-linked (GlcNAc...) asparagine; by host glycosylation sites follow: Asn-351, Asn-354, Asn-394, Asn-410, and Asn-430. A fusion peptide region spans residues 467 to 487 (PISLTVALMLGGITVGGMARN). 2 coiled-coil regions span residues 495–544 (LETA…ILFL) and 554–590 (KEEC…SQQD). The interval 533-549 (LQNRRGLDILFLQEGGL) is immunosuppression. The short motif at 550 to 558 (CTALKEECC) is the CX6CC element. Residues 606–626 (ISSIMGPLMILLLILLFGPCI) traverse the membrane as a helical segment. A lipid anchor (S-palmitoyl cysteine; by host) is attached at Cys-625. At 627-668 (LNRLVQFVKDRISVVQTLVLTQQYQRLGQWRLRPTVSPQLNV) the chain is on the cytoplasmic side. Residues 650–653 (YQRL) carry the YXXL motif; contains endocytosis signal motif.

The mature envelope protein (Env) consists of a trimer of SU-TM heterodimers attached by a labile interchain disulfide bond. In terms of processing, specific enzymatic cleavages in vivo yield mature proteins. Envelope glycoproteins are synthesized as an inactive precursor that is N-glycosylated and processed likely by host cell furin or by a furin-like protease in the Golgi to yield the mature SU and TM proteins. The cleavage site between SU and TM requires the minimal sequence [KR]-X-[KR]-R. The R-peptide is released from the C-terminus of the cytoplasmic tail of the TM protein upon particle formation as a result of proteolytic cleavage by the viral protease. Cleavage of this peptide is required for TM to become fusogenic. Post-translationally, the CXXC motif is highly conserved across a broad range of retroviral envelope proteins. It is thought to participate in the formation of a labile disulfide bond possibly with the CX6CC motif present in the transmembrane protein. Isomerization of the intersubunit disulfide bond to an SU intrachain disulfide bond is thought to occur upon receptor recognition in order to allow membrane fusion. The transmembrane protein is palmitoylated. In terms of processing, the R-peptide is palmitoylated.

The protein resides in the virion membrane. The protein localises to the host cell membrane. Its function is as follows. The surface protein (SU) attaches the virus to the host cell by binding to its receptor. This interaction triggers the refolding of the transmembrane protein (TM) and is thought to activate its fusogenic potential by unmasking its fusion peptide. Fusion occurs at the host cell plasma membrane. The transmembrane protein (TM) acts as a class I viral fusion protein. Under the current model, the protein has at least 3 conformational states: pre-fusion native state, pre-hairpin intermediate state, and post-fusion hairpin state. During viral and target cell membrane fusion, the coiled coil regions (heptad repeats) assume a trimer-of-hairpins structure, positioning the fusion peptide in close proximity to the C-terminal region of the ectodomain. The formation of this structure appears to drive apposition and subsequent fusion of viral and target cell membranes. Membranes fusion leads to delivery of the nucleocapsid into the cytoplasm. The polypeptide is Envelope glycoprotein (env) (Felidae (cat family)).